Here is a 420-residue protein sequence, read N- to C-terminus: Serine hydroxymethyltransferase (420 aa).

(6S)-5,6,7,8-tetrahydrofolate contacts are provided by residues L123 and 127 to 129; that span reads GHL. K232 carries the N6-(pyridoxal phosphate)lysine modification. (6S)-5,6,7,8-tetrahydrofolate is bound at residue 357–359; it reads SPF.

Belongs to the SHMT family. Homodimer. It depends on pyridoxal 5'-phosphate as a cofactor.

It is found in the cytoplasm. It carries out the reaction (6R)-5,10-methylene-5,6,7,8-tetrahydrofolate + glycine + H2O = (6S)-5,6,7,8-tetrahydrofolate + L-serine. Its pathway is one-carbon metabolism; tetrahydrofolate interconversion. It functions in the pathway amino-acid biosynthesis; glycine biosynthesis; glycine from L-serine: step 1/1. Catalyzes the reversible interconversion of serine and glycine with tetrahydrofolate (THF) serving as the one-carbon carrier. This reaction serves as the major source of one-carbon groups required for the biosynthesis of purines, thymidylate, methionine, and other important biomolecules. Also exhibits THF-independent aldolase activity toward beta-hydroxyamino acids, producing glycine and aldehydes, via a retro-aldol mechanism. In Streptococcus pyogenes serotype M2 (strain MGAS10270), this protein is Serine hydroxymethyltransferase.